The sequence spans 365 residues: Aminomethyltransferase (365 aa).

It belongs to the GcvT family. In terms of assembly, the glycine cleavage system is composed of four proteins: P, T, L and H.

It carries out the reaction N(6)-[(R)-S(8)-aminomethyldihydrolipoyl]-L-lysyl-[protein] + (6S)-5,6,7,8-tetrahydrofolate = N(6)-[(R)-dihydrolipoyl]-L-lysyl-[protein] + (6R)-5,10-methylene-5,6,7,8-tetrahydrofolate + NH4(+). In terms of biological role, the glycine cleavage system catalyzes the degradation of glycine. The chain is Aminomethyltransferase from Aeromonas hydrophila subsp. hydrophila (strain ATCC 7966 / DSM 30187 / BCRC 13018 / CCUG 14551 / JCM 1027 / KCTC 2358 / NCIMB 9240 / NCTC 8049).